A 340-amino-acid polypeptide reads, in one-letter code: L-threonine 3-dehydrogenase (340 aa).

Cys-38 provides a ligand contact to Zn(2+). Active-site charge relay system residues include Thr-40 and His-43. Zn(2+) is bound by residues His-63, Glu-64, Cys-93, Cys-96, Cys-99, and Cys-107. NAD(+) contacts are provided by residues Ile-175, Asp-195, Arg-200, Leu-261–Ile-263, and Ile-285–Tyr-286.

This sequence belongs to the zinc-containing alcohol dehydrogenase family. In terms of assembly, homotetramer. The cofactor is Zn(2+).

It localises to the cytoplasm. It carries out the reaction L-threonine + NAD(+) = (2S)-2-amino-3-oxobutanoate + NADH + H(+). The protein operates within amino-acid degradation; L-threonine degradation via oxydo-reductase pathway; glycine from L-threonine: step 1/2. In terms of biological role, catalyzes the NAD(+)-dependent oxidation of L-threonine to 2-amino-3-ketobutyrate. This Xanthomonas oryzae pv. oryzae (strain MAFF 311018) protein is L-threonine 3-dehydrogenase.